Reading from the N-terminus, the 115-residue chain is Photosystem II reaction center Psb28 protein (115 aa).

Belongs to the Psb28 family. As to quaternary structure, part of the photosystem II complex.

It localises to the plastid. The protein resides in the chloroplast thylakoid membrane. This is Photosystem II reaction center Psb28 protein from Pyropia yezoensis (Susabi-nori).